Here is a 181-residue protein sequence, read N- to C-terminus: Protein csk22 (181 aa).

5 consecutive transmembrane segments (helical) span residues 5–22 (LQSV…YKKI), 35–57 (WLFT…SAIH), 61–78 (YGYL…VFFA), 91–113 (IYFR…RFLY), and 140–162 (LTIG…IIKL).

The protein localises to the cell membrane. The chain is Protein csk22 (csk22) from Bacillus subtilis (strain 168).